Consider the following 609-residue polypeptide: Protein NRT1/ PTR FAMILY 7.1 (609 aa).

2 helical membrane passes run 67–87 (IILLVNQGLATLAFFGVGVNL) and 109–129 (WTGTVYMFSLVGAFLSDSYWG). A Phosphothreonine modification is found at Thr133. Helical transmembrane passes span 136 to 156 (IFQVIFVIGVGLLSFVSWFFL), 173 to 193 (SSLGVAIFYLSVYLVAFGYGG), 216 to 236 (FFSYFYFALNVGALFSNTILV), 243 to 263 (LWTEGFLVSLGSAIVALVAFL), 367 to 387 (PIWLCTIIYSVIFTQMASLFV), 402 to 422 (IPAASMSVFDIFSVFVSTGIY), 438 to 458 (MGIGLIIGIMAMVAAGLTEIQ), 474 to 494 (ILWQIPQYVLVGASEVFMYVG), 516 to 536 (MASMALGNYVSSLMVNIVMAI), and 559 to 579 (FYFLIAALAAIDFVVYLIFAK).

The protein belongs to the major facilitator superfamily. Proton-dependent oligopeptide transporter (POT/PTR) (TC 2.A.17) family. In terms of tissue distribution, expressed in flowers.

The protein resides in the membrane. The polypeptide is Protein NRT1/ PTR FAMILY 7.1 (NPF7.1) (Arabidopsis thaliana (Mouse-ear cress)).